A 252-amino-acid chain; its full sequence is Type III pantothenate kinase (252 aa).

Position 6–13 (6–13 (DMGNTRLK)) interacts with ATP. Substrate is bound by residues Tyr93 and 100–103 (GVDR). Residue Asp102 is the Proton acceptor of the active site. ATP is bound at residue Thr126. Thr179 lines the substrate pocket.

The protein belongs to the type III pantothenate kinase family. Homodimer. Requires NH4(+) as cofactor. It depends on K(+) as a cofactor.

The protein localises to the cytoplasm. It catalyses the reaction (R)-pantothenate + ATP = (R)-4'-phosphopantothenate + ADP + H(+). The protein operates within cofactor biosynthesis; coenzyme A biosynthesis; CoA from (R)-pantothenate: step 1/5. Its function is as follows. Catalyzes the phosphorylation of pantothenate (Pan), the first step in CoA biosynthesis. The chain is Type III pantothenate kinase from Cellvibrio japonicus (strain Ueda107) (Pseudomonas fluorescens subsp. cellulosa).